The chain runs to 313 residues: 3-O-acetylpapaveroxine carboxylesterase CXE2 (313 aa).

The short motif at histidine 72–glycine 74 is the Involved in the stabilization of the negatively charged intermediate by the formation of the oxyanion hole element. Active-site residues include serine 158, aspartate 262, and histidine 292.

It belongs to the 'GDXG' lipolytic enzyme family.

It catalyses the reaction 3-O-acetylpapaveroxine + H2O = narcotine hemiacetal + acetate + H(+). It functions in the pathway alkaloid biosynthesis. Functionally, carboxylesterase involved in the biosynthesis of the benzylisoquinoline alkaloid noscapine. Converts 3-O-acetylpapaveroxine to narcotine hemiacetal. This chain is 3-O-acetylpapaveroxine carboxylesterase CXE2, found in Papaver somniferum (Opium poppy).